The primary structure comprises 573 residues: Developmental and secondary metabolism regulator VEL1 (573 aa).

The Velvet domain occupies 26 to 220; sequence NRHLWYQLTV…ADQGCRVRIR (195 aa). Positions 40-45 match the Nuclear localization signal motif; sequence ERARAC. The tract at residues 222-520 is disordered; the sequence is DVRMRKRDGK…STGGKRKHDH (299 aa). Basic and acidic residues predominate over residues 230–245; it reads GKGSGFDRRGEEEYSR. Composition is skewed to pro residues over residues 291–310 and 341–351; these read APPP…PPAA and APIPPATPTGP. A compositionally biased stretch (low complexity) spans 352 to 363; the sequence is YPTSSAAPSPYA. Residues 379-389 show a composition bias toward pro residues; it reads PPAPSASPAPP. A compositionally biased stretch (polar residues) spans 432-448; it reads TPASQPTYSTPASQPTY. A compositionally biased stretch (pro residues) spans 458–475; that stretch reads SAPPPAPYSAPAPPPPRP. A PEST region spans residues 476 to 504; the sequence is SMSQSSLAPLKIASLVSPLPPIEAQTEPL.

Belongs to the velvet family. VeA subfamily. Component of the heterotrimeric velvet complex composed of LAE1, VEL1 and VEL2; VEL1 acting as a bridging protein between LAE1 and VEL2. Interacts with LAE1.

It localises to the nucleus. The protein resides in the cytoplasm. Functionally, component of the velvet transcription factor complex that controls sexual/asexual developmental ratio in response to light, promoting sexual development in the darkness while stimulating asexual sporulation under illumination. The velvet complex hat acts as a global regulator for secondary metabolite gene expression. Regulates expression of the carbohydrate-active enzyme gene clusters. The protein is Developmental and secondary metabolism regulator VEL1 of Hypocrea jecorina (strain QM6a) (Trichoderma reesei).